The primary structure comprises 648 residues: Magnetosome protein MamZ (648 aa).

Residues 1 to 431 are major facilitator domain; the sequence is MLEAWMPKSG…YAAWLLANGI (431 aa). A run of 18 helical transmembrane segments spans residues 28-49, 69-87, 94-113, 119-143, 163-182, 188-207, 252-273, 285-305, 317-335, 341-361, 373-395, 407-428, 449-468, 488-506, 518-538, 558-574, 595-612, and 618-634; these read IIYLLMTVGSLVAALSISIQPL, IQVVAEIVSIVCVGWFGLL, VRIIATGFLIAVAGAAMSLL, LAFGAAGLVLFYLTRVLLTVGADTV, LMGNLVFMMVFGGTMLSAII, YKGGVFIIMCLPLLIGIAGF, FYTRADVIILSLFFSLWCISVS, AHAAVMIGLLGLAVLAAIPLW, AIGASLSLAAVGYIWLGMF, WLVALPLLMVGIGHAGCFVTL, ILGAMVGAGYLVGGLGTVMLVQS, APFILMGTGKMLVTLYAAWLLA, PLVFLTAALPFVWLIGRSVI, YLGDWAFTFLIISLSMRPV, YRRMIGLFAFFYAVLHVLAYV, FILLGLAAFLLLIPLAF, ATYVINALVALHFILAAN, and PYVYAAAVIVLLWYRFY. Residues 444–645 form a ferric reductase-like domain, required for correct magnetite crystal formation region; it reads KVDWKPLVFL…WRGGNVLRAL (202 aa).

This sequence in the N-terminal section; belongs to the major facilitator superfamily. Probably interacts with FtsZ-like and MamY proteins.

It is found in the magnetosome membrane. Functionally, required for correct biomineralization of the magnetosome; probably converts and then transports some form of iron. It is partially functionally redundant with MamH. May function with MamX, MamY amd Mms6 in biomineralization. Despite its strong similarity to MsrQ (AC V6EX82) this protein does not genetically interact with bona fide MsrP (AC V6F0A4), which is encoded elsewhere in the genome. The chain is Magnetosome protein MamZ from Magnetospirillum gryphiswaldense (strain DSM 6361 / JCM 21280 / NBRC 15271 / MSR-1).